We begin with the raw amino-acid sequence, 248 residues long: Histone H1, gonadal (248 aa).

Disordered stretches follow at residues 1 to 46 (PGSP…PPVL) and 115 to 248 (AVAK…KARK). Over residues 9-39 (ASPRKSPRKSPKKSPRKASASPRRKAKRARA) the composition is skewed to basic residues. The region spanning 41–115 (THPPVLEMVQ…GASGRFRVGA (75 aa)) is the H15 domain. Residues 118–248 (KPKKAKKTSA…KRRSPKKARK (131 aa)) are compositionally biased toward basic residues.

This sequence belongs to the histone H1/H5 family. In terms of tissue distribution, sperm.

It localises to the nucleus. The protein resides in the chromosome. Its function is as follows. Histones H1 are necessary for the condensation of nucleosome chains into higher-order structures. The chain is Histone H1, gonadal from Parechinus angulosus (Angulate sea urchin).